Reading from the N-terminus, the 165-residue chain is Xanthine-guanine phosphoribosyltransferase (165 aa).

5-phospho-alpha-D-ribose 1-diphosphate contacts are provided by residues 41-42 (RG) and 98-106 (DDLTDTGKT). Aspartate 99 contacts Mg(2+). Guanine-binding residues include aspartate 102 and isoleucine 145. The xanthine site is built by aspartate 102 and isoleucine 145. GMP-binding positions include 102–106 (DTGKT) and 144–145 (WI).

It belongs to the purine/pyrimidine phosphoribosyltransferase family. XGPT subfamily. Homotetramer. It depends on Mg(2+) as a cofactor.

It localises to the cell inner membrane. It catalyses the reaction GMP + diphosphate = guanine + 5-phospho-alpha-D-ribose 1-diphosphate. The enzyme catalyses XMP + diphosphate = xanthine + 5-phospho-alpha-D-ribose 1-diphosphate. It carries out the reaction IMP + diphosphate = hypoxanthine + 5-phospho-alpha-D-ribose 1-diphosphate. Its pathway is purine metabolism; GMP biosynthesis via salvage pathway; GMP from guanine: step 1/1. It participates in purine metabolism; XMP biosynthesis via salvage pathway; XMP from xanthine: step 1/1. Its function is as follows. Purine salvage pathway enzyme that catalyzes the transfer of the ribosyl-5-phosphate group from 5-phospho-alpha-D-ribose 1-diphosphate (PRPP) to the N9 position of the 6-oxopurines guanine and xanthine to form the corresponding ribonucleotides GMP (guanosine 5'-monophosphate) and XMP (xanthosine 5'-monophosphate), with the release of PPi. To a lesser extent, also acts on hypoxanthine. In Agrobacterium fabrum (strain C58 / ATCC 33970) (Agrobacterium tumefaciens (strain C58)), this protein is Xanthine-guanine phosphoribosyltransferase.